The following is a 448-amino-acid chain: DNA repair protein RadA (448 aa).

Residues 10–27 (CSNCGNTSPKWSGQCFDC) form a C4-type zinc finger. 91-98 (GDPGIGKS) serves as a coordination point for ATP. Residues 250–254 (KNRFG) carry the RadA KNRFG motif motif. The tract at residues 349 to 448 (EVYLSIAGGL…KDLKLLLGSS (100 aa)) is lon-protease-like.

The protein belongs to the RecA family. RadA subfamily.

DNA-dependent ATPase involved in processing of recombination intermediates, plays a role in repairing DNA breaks. Stimulates the branch migration of RecA-mediated strand transfer reactions, allowing the 3' invading strand to extend heteroduplex DNA faster. Binds ssDNA in the presence of ADP but not other nucleotides, has ATPase activity that is stimulated by ssDNA and various branched DNA structures, but inhibited by SSB. Does not have RecA's homology-searching function. The polypeptide is DNA repair protein RadA (Rickettsia bellii (strain RML369-C)).